The sequence spans 122 residues: Large ribosomal subunit protein uL14 (122 aa).

The protein belongs to the universal ribosomal protein uL14 family. In terms of assembly, part of the 50S ribosomal subunit. Forms a cluster with proteins L3 and L19. In the 70S ribosome, L14 and L19 interact and together make contacts with the 16S rRNA in bridges B5 and B8.

Its function is as follows. Binds to 23S rRNA. Forms part of two intersubunit bridges in the 70S ribosome. The chain is Large ribosomal subunit protein uL14 from Campylobacter hominis (strain ATCC BAA-381 / DSM 21671 / CCUG 45161 / LMG 19568 / NCTC 13146 / CH001A).